A 246-amino-acid polypeptide reads, in one-letter code: ATP synthase subunit a, chloroplastic (246 aa).

Helical transmembrane passes span glycine 35–alanine 55, valine 94–leucine 114, aspartate 132–isoleucine 152, leucine 198–leucine 218, and glycine 219–glycine 239.

The protein belongs to the ATPase A chain family. F-type ATPases have 2 components, CF(1) - the catalytic core - and CF(0) - the membrane proton channel. CF(1) has five subunits: alpha(3), beta(3), gamma(1), delta(1), epsilon(1). CF(0) has four main subunits: a, b, b' and c.

It localises to the plastid. The protein resides in the chloroplast thylakoid membrane. Its function is as follows. Key component of the proton channel; it plays a direct role in the translocation of protons across the membrane. The sequence is that of ATP synthase subunit a, chloroplastic from Stigeoclonium helveticum (Green alga).